A 101-amino-acid chain; its full sequence is Small ribosomal subunit protein uS14 (101 aa).

The protein belongs to the universal ribosomal protein uS14 family. In terms of assembly, part of the 30S ribosomal subunit. Contacts proteins S3 and S10.

Binds 16S rRNA, required for the assembly of 30S particles and may also be responsible for determining the conformation of the 16S rRNA at the A site. The chain is Small ribosomal subunit protein uS14 from Shewanella amazonensis (strain ATCC BAA-1098 / SB2B).